Here is a 127-residue protein sequence, read N- to C-terminus: Fluoride-specific ion channel FluC (127 aa).

Helical transmembrane passes span 4 to 24 (TLLAVFIGGGVGSVARWQLGV), 35 to 55 (LGTLLANLIGAFVIGGALAFF), 71 to 91 (TGLCGGLTTFSTFSAEVVMFL), and 103 to 123 (VLLNLAGSLLMTALAFALVTW). Positions 75 and 78 each coordinate Na(+).

It belongs to the fluoride channel Fluc/FEX (TC 1.A.43) family.

It localises to the cell inner membrane. The enzyme catalyses fluoride(in) = fluoride(out). With respect to regulation, na(+) is not transported, but it plays an essential structural role and its presence is essential for fluoride channel function. Its function is as follows. Fluoride-specific ion channel. Important for reducing fluoride concentration in the cell, thus reducing its toxicity. The chain is Fluoride-specific ion channel FluC from Pectobacterium atrosepticum (strain SCRI 1043 / ATCC BAA-672) (Erwinia carotovora subsp. atroseptica).